The primary structure comprises 314 residues: 4-hydroxy-3-methylbut-2-enyl diphosphate reductase (314 aa).

Cys12 is a binding site for [4Fe-4S] cluster. (2E)-4-hydroxy-3-methylbut-2-enyl diphosphate contacts are provided by His41 and His74. The dimethylallyl diphosphate site is built by His41 and His74. His41 and His74 together coordinate isopentenyl diphosphate. Residue Cys96 coordinates [4Fe-4S] cluster. (2E)-4-hydroxy-3-methylbut-2-enyl diphosphate is bound at residue His124. Residue His124 participates in dimethylallyl diphosphate binding. His124 provides a ligand contact to isopentenyl diphosphate. Residue Glu126 is the Proton donor of the active site. Thr168 is a binding site for (2E)-4-hydroxy-3-methylbut-2-enyl diphosphate. Residue Cys198 coordinates [4Fe-4S] cluster. (2E)-4-hydroxy-3-methylbut-2-enyl diphosphate contacts are provided by Ser226, Ser227, Asn228, and Ser270. Ser226, Ser227, Asn228, and Ser270 together coordinate dimethylallyl diphosphate. Positions 226, 227, 228, and 270 each coordinate isopentenyl diphosphate.

The protein belongs to the IspH family. Requires [4Fe-4S] cluster as cofactor.

The enzyme catalyses isopentenyl diphosphate + 2 oxidized [2Fe-2S]-[ferredoxin] + H2O = (2E)-4-hydroxy-3-methylbut-2-enyl diphosphate + 2 reduced [2Fe-2S]-[ferredoxin] + 2 H(+). It catalyses the reaction dimethylallyl diphosphate + 2 oxidized [2Fe-2S]-[ferredoxin] + H2O = (2E)-4-hydroxy-3-methylbut-2-enyl diphosphate + 2 reduced [2Fe-2S]-[ferredoxin] + 2 H(+). Its pathway is isoprenoid biosynthesis; dimethylallyl diphosphate biosynthesis; dimethylallyl diphosphate from (2E)-4-hydroxy-3-methylbutenyl diphosphate: step 1/1. It functions in the pathway isoprenoid biosynthesis; isopentenyl diphosphate biosynthesis via DXP pathway; isopentenyl diphosphate from 1-deoxy-D-xylulose 5-phosphate: step 6/6. In terms of biological role, catalyzes the conversion of 1-hydroxy-2-methyl-2-(E)-butenyl 4-diphosphate (HMBPP) into a mixture of isopentenyl diphosphate (IPP) and dimethylallyl diphosphate (DMAPP). Acts in the terminal step of the DOXP/MEP pathway for isoprenoid precursor biosynthesis. This is 4-hydroxy-3-methylbut-2-enyl diphosphate reductase from Pseudomonas fluorescens (strain Pf0-1).